The primary structure comprises 100 residues: Urease subunit gamma (100 aa).

It belongs to the urease gamma subunit family. As to quaternary structure, heterotrimer of UreA (gamma), UreB (beta) and UreC (alpha) subunits. Three heterotrimers associate to form the active enzyme.

It localises to the cytoplasm. It carries out the reaction urea + 2 H2O + H(+) = hydrogencarbonate + 2 NH4(+). The protein operates within nitrogen metabolism; urea degradation; CO(2) and NH(3) from urea (urease route): step 1/1. This Prochlorococcus marinus (strain MIT 9313) protein is Urease subunit gamma.